The primary structure comprises 525 residues: Glutamate--cysteine ligase (525 aa).

This sequence belongs to the glutamate--cysteine ligase type 1 family. Type 1 subfamily.

It catalyses the reaction L-cysteine + L-glutamate + ATP = gamma-L-glutamyl-L-cysteine + ADP + phosphate + H(+). It functions in the pathway sulfur metabolism; glutathione biosynthesis; glutathione from L-cysteine and L-glutamate: step 1/2. The polypeptide is Glutamate--cysteine ligase (Pseudomonas putida (strain W619)).